The chain runs to 263 residues: Small ribosomal subunit protein eS4 (263 aa).

An S4 RNA-binding domain is found at 42–104; sequence LPLIIFLRNR…TGENFRLIYD (63 aa).

The protein belongs to the eukaryotic ribosomal protein eS4 family.

In Cricetulus griseus (Chinese hamster), this protein is Small ribosomal subunit protein eS4 (RPS4).